Here is a 208-residue protein sequence, read N- to C-terminus: Large ribosomal subunit protein uL3 (208 aa).

Belongs to the universal ribosomal protein uL3 family. Part of the 50S ribosomal subunit. Forms a cluster with proteins L14 and L19.

In terms of biological role, one of the primary rRNA binding proteins, it binds directly near the 3'-end of the 23S rRNA, where it nucleates assembly of the 50S subunit. In Desulfosudis oleivorans (strain DSM 6200 / JCM 39069 / Hxd3) (Desulfococcus oleovorans), this protein is Large ribosomal subunit protein uL3.